The sequence spans 437 residues: Elongator complex protein 4 (437 aa).

Residues 179 to 247 are disordered; it reads FSKSSSPTTP…TKTGSQDSPL (69 aa). A compositionally biased stretch (polar residues) spans 181 to 192; the sequence is KSSSPTTPSLEQ. A Phosphoserine modification is found at Ser183. The segment covering 220-237 has biased composition (low complexity); the sequence is SANNNNNNNNNSSSVTSS. At Ser242 the chain carries Phosphoserine.

It belongs to the ELP4 family. As to quaternary structure, component of the elongator complex composed of Elp1, Elp2, Elp3, Elp4, Elp5 and Elp6. The elongator complex associates with and stabilizes microtubules; efficient interaction requires the full complex.

Its subcellular location is the cytoplasm. The protein localises to the nucleus. It is found in the cytoskeleton. It localises to the spindle. It participates in tRNA modification; 5-methoxycarbonylmethyl-2-thiouridine-tRNA biosynthesis. Component of the elongator complex, which is required for multiple tRNA modifications, including mcm5U (5-methoxycarbonylmethyl uridine), mcm5s2U (5-methoxycarbonylmethyl-2-thiouridine), and ncm5U (5-carbamoylmethyl uridine). The elongator complex catalyzes the formation of carboxymethyluridine in the wobble base at position 34 in tRNAs. Binding by the elongator complex stabilizes microtubules and promotes their growth. This induces central spindle asymmetry, promoting polarized signaling endosome trafficking during asymmetric cell division and cell fate assignation of sensory organ precursor cells. The protein is Elongator complex protein 4 of Drosophila melanogaster (Fruit fly).